A 168-amino-acid polypeptide reads, in one-letter code: Cell division inhibitor SulA (168 aa).

Residues 105 to 111 (ALLTGNY) form a ftsZ binding region. The lon protease binding stretch occupies residues 161–168 (KIHSTLYH).

The protein belongs to the SulA family. Interacts with FtsZ. In terms of processing, is rapidly cleaved and degraded by the Lon protease once DNA damage is repaired.

Functionally, component of the SOS system and an inhibitor of cell division. Accumulation of SulA causes rapid cessation of cell division and the appearance of long, non-septate filaments. In the presence of GTP, binds a polymerization-competent form of FtsZ in a 1:1 ratio, thus inhibiting FtsZ polymerization and therefore preventing it from participating in the assembly of the Z ring. This mechanism prevents the premature segregation of damaged DNA to daughter cells during cell division. This chain is Cell division inhibitor SulA, found in Pectobacterium carotovorum subsp. carotovorum (strain PC1).